A 749-amino-acid chain; its full sequence is NAD(P)H-quinone oxidoreductase subunit 5, chloroplastic (749 aa).

The next 16 helical transmembrane spans lie at 9-29 (WIIPFIPLTVPMSIGLGLLLV), 40-60 (WAFFSVSLLSIVMVFSADLSI), 89-109 (IDPLTSIMLILITTVGIMVLI), 147-167 (IYIFWELVGMCSYLLIGFWFT), 185-205 (GDFGLLLGILGLYWITGSFEF), 219-239 (NGVNSLFVTFFASLLFLGAVA), 258-278 (TPISALIHAATMVVAGIFLVA), 280-300 (LLPLFTVIPYIMNLISLIGVI), 327-347 (LGYIMLAPGIGSYRAASFHLI), 354-374 (ALLFLGSGSIIHSMEPIVGYS), 396-416 (ITFLLGTLSLCGIPPLACFWS), 425-445 (WLYSPIFAIIACFTTGLTAFY), 544-564 (TMLLPLLVLVIFTLFVGFIGV), 605-625 (IFSVSIACFGIWIASLLYGSV), 694-714 (GITNGFGIASFFVGEGVKYVG), and 722-742 (LFLYLSYVSIFLVISYFCFGI).

This sequence belongs to the complex I subunit 5 family. NDH is composed of at least 16 different subunits, 5 of which are encoded in the nucleus.

Its subcellular location is the plastid. It is found in the chloroplast thylakoid membrane. It catalyses the reaction a plastoquinone + NADH + (n+1) H(+)(in) = a plastoquinol + NAD(+) + n H(+)(out). The catalysed reaction is a plastoquinone + NADPH + (n+1) H(+)(in) = a plastoquinol + NADP(+) + n H(+)(out). In terms of biological role, NDH shuttles electrons from NAD(P)H:plastoquinone, via FMN and iron-sulfur (Fe-S) centers, to quinones in the photosynthetic chain and possibly in a chloroplast respiratory chain. The immediate electron acceptor for the enzyme in this species is believed to be plastoquinone. Couples the redox reaction to proton translocation, and thus conserves the redox energy in a proton gradient. This chain is NAD(P)H-quinone oxidoreductase subunit 5, chloroplastic (ndhF), found in Illicium oligandrum (Star anise).